Here is a 358-residue protein sequence, read N- to C-terminus: tRNA (guanine-N(7)-)-methyltransferase (358 aa).

The tract at residues 1–29 (MTPPPPKRQKRDEYRKATAEATSQSGASD) is disordered. Residues G99 and 122 to 123 (EI) contribute to the S-adenosyl-L-methionine site. Positions 151–186 (TATAASETPSQQQAQIDGKQANANAAADAASPAPST) are enriched in low complexity. The disordered stretch occupies residues 151-194 (TATAASETPSQQQAQIDGKQANANAAADAASPAPSTDTEHMPTT). Residues 209–210 (NT) and C229 contribute to the S-adenosyl-L-methionine site. D232 is an active-site residue. An S-adenosyl-L-methionine-binding site is contributed by 330–332 (TEE).

The protein belongs to the class I-like SAM-binding methyltransferase superfamily. TrmB family. In terms of assembly, forms a complex with trm82.

The protein localises to the nucleus. The enzyme catalyses guanosine(46) in tRNA + S-adenosyl-L-methionine = N(7)-methylguanosine(46) in tRNA + S-adenosyl-L-homocysteine. The protein operates within tRNA modification; N(7)-methylguanine-tRNA biosynthesis. Its function is as follows. Catalyzes the formation of N(7)-methylguanine at position 46 (m7G46) in tRNA. This chain is tRNA (guanine-N(7)-)-methyltransferase (trm8), found in Aspergillus fumigatus (strain CBS 144.89 / FGSC A1163 / CEA10) (Neosartorya fumigata).